We begin with the raw amino-acid sequence, 281 residues long: 3-methyl-2-oxobutanoate hydroxymethyltransferase (281 aa).

Mg(2+) contacts are provided by Asp-49 and Asp-88. Residues 49 to 50 (DS), Asp-88, and Lys-118 each bind 3-methyl-2-oxobutanoate. Glu-120 lines the Mg(2+) pocket. The active-site Proton acceptor is the Glu-186.

It belongs to the PanB family. In terms of assembly, homodecamer; pentamer of dimers. Requires Mg(2+) as cofactor.

It localises to the cytoplasm. It catalyses the reaction 3-methyl-2-oxobutanoate + (6R)-5,10-methylene-5,6,7,8-tetrahydrofolate + H2O = 2-dehydropantoate + (6S)-5,6,7,8-tetrahydrofolate. Its pathway is cofactor biosynthesis; (R)-pantothenate biosynthesis; (R)-pantoate from 3-methyl-2-oxobutanoate: step 1/2. Catalyzes the reversible reaction in which hydroxymethyl group from 5,10-methylenetetrahydrofolate is transferred onto alpha-ketoisovalerate to form ketopantoate. This is 3-methyl-2-oxobutanoate hydroxymethyltransferase from Chelativorans sp. (strain BNC1).